Consider the following 119-residue polypeptide: Large ribosomal subunit protein uL18 (119 aa).

The protein belongs to the universal ribosomal protein uL18 family. In terms of assembly, part of the 50S ribosomal subunit; part of the 5S rRNA/L5/L18/L25 subcomplex. Contacts the 5S and 23S rRNAs.

Functionally, this is one of the proteins that bind and probably mediate the attachment of the 5S RNA into the large ribosomal subunit, where it forms part of the central protuberance. This is Large ribosomal subunit protein uL18 from Ruegeria sp. (strain TM1040) (Silicibacter sp.).